The sequence spans 508 residues: ATP synthase subunit alpha, chloroplastic (508 aa).

172 to 179 (GDRQTGKT) contacts ATP.

It belongs to the ATPase alpha/beta chains family. As to quaternary structure, F-type ATPases have 2 components, CF(1) - the catalytic core - and CF(0) - the membrane proton channel. CF(1) has five subunits: alpha(3), beta(3), gamma(1), delta(1), epsilon(1). CF(0) has four main subunits: a, b, b' and c.

The protein localises to the plastid. It localises to the chloroplast thylakoid membrane. The enzyme catalyses ATP + H2O + 4 H(+)(in) = ADP + phosphate + 5 H(+)(out). In terms of biological role, produces ATP from ADP in the presence of a proton gradient across the membrane. The alpha chain is a regulatory subunit. The protein is ATP synthase subunit alpha, chloroplastic of Angiopteris evecta (Mule's foot fern).